Here is a 498-residue protein sequence, read N- to C-terminus: Probable cytosol aminopeptidase (498 aa).

Residues K264 and D269 each contribute to the Mn(2+) site. K276 is an active-site residue. Mn(2+)-binding residues include D287, D346, and E348. Residue R350 is part of the active site.

This sequence belongs to the peptidase M17 family. The cofactor is Mn(2+).

The protein localises to the cytoplasm. It catalyses the reaction Release of an N-terminal amino acid, Xaa-|-Yaa-, in which Xaa is preferably Leu, but may be other amino acids including Pro although not Arg or Lys, and Yaa may be Pro. Amino acid amides and methyl esters are also readily hydrolyzed, but rates on arylamides are exceedingly low.. The catalysed reaction is Release of an N-terminal amino acid, preferentially leucine, but not glutamic or aspartic acids.. Its function is as follows. Presumably involved in the processing and regular turnover of intracellular proteins. Catalyzes the removal of unsubstituted N-terminal amino acids from various peptides. The chain is Probable cytosol aminopeptidase from Brucella anthropi (strain ATCC 49188 / DSM 6882 / CCUG 24695 / JCM 21032 / LMG 3331 / NBRC 15819 / NCTC 12168 / Alc 37) (Ochrobactrum anthropi).